Consider the following 510-residue polypeptide: Light-independent protochlorophyllide reductase subunit B (510 aa).

Residue aspartate 36 participates in [4Fe-4S] cluster binding. The active-site Proton donor is the aspartate 296. Residue 431–432 participates in substrate binding; sequence GM.

Belongs to the ChlB/BchB/BchZ family. In terms of assembly, protochlorophyllide reductase is composed of three subunits; ChlL, ChlN and ChlB. Forms a heterotetramer of two ChlB and two ChlN subunits. Requires [4Fe-4S] cluster as cofactor.

The protein resides in the plastid. It localises to the chloroplast. It catalyses the reaction chlorophyllide a + oxidized 2[4Fe-4S]-[ferredoxin] + 2 ADP + 2 phosphate = protochlorophyllide a + reduced 2[4Fe-4S]-[ferredoxin] + 2 ATP + 2 H2O. Its pathway is porphyrin-containing compound metabolism; chlorophyll biosynthesis (light-independent). In terms of biological role, component of the dark-operative protochlorophyllide reductase (DPOR) that uses Mg-ATP and reduced ferredoxin to reduce ring D of protochlorophyllide (Pchlide) to form chlorophyllide a (Chlide). This reaction is light-independent. The NB-protein (ChlN-ChlB) is the catalytic component of the complex. In Stigeoclonium helveticum (Green alga), this protein is Light-independent protochlorophyllide reductase subunit B.